A 155-amino-acid polypeptide reads, in one-letter code: MSDKLTQIQDELDALLNMMQRQIAHIVLQAPPSVPPGQHRVDTMPEIKGKAASENPQSNPPQPAEPPVPEKISPEQFNQDLKEFSRDIVVKQQQVELLIASLPGLNVSEEQQVARMKELEKELEGLEDERAQAVREKEVLLKKVEDKIMSVGRSR.

Residues 29 to 73 (QAPPSVPPGQHRVDTMPEIKGKAASENPQSNPPQPAEPPVPEKIS) form a disordered region. The span at 39 to 51 (HRVDTMPEIKGKA) shows a compositional bias: basic and acidic residues. Positions 58–69 (SNPPQPAEPPVP) are enriched in pro residues. Residues 75–147 (EQFNQDLKEF…EVLLKKVEDK (73 aa)) are a coiled coil.

This sequence belongs to the Mediator complex subunit 21 family. As to quaternary structure, component of the Mediator complex.

It is found in the nucleus. Its function is as follows. Component of the Mediator complex, a coactivator involved in the regulated transcription of nearly all RNA polymerase II-dependent genes. Mediator functions as a bridge to convey information from gene-specific regulatory proteins to the basal RNA polymerase II transcription machinery. Mediator is recruited to promoters by direct interactions with regulatory proteins and serves as a scaffold for the assembly of a functional preinitiation complex with RNA polymerase II and the general transcription factors. This chain is Mediator of RNA polymerase II transcription subunit 21 (SRB7), found in Phaeosphaeria nodorum (strain SN15 / ATCC MYA-4574 / FGSC 10173) (Glume blotch fungus).